The primary structure comprises 321 residues: Lipoyl synthase (321 aa).

Residues Cys-68, Cys-73, Cys-79, Cys-94, Cys-98, Cys-101, and Ser-308 each coordinate [4Fe-4S] cluster. Residues 80–297 (FNHGTATFMI…KVIAEDLGFS (218 aa)) enclose the Radical SAM core domain.

Belongs to the radical SAM superfamily. Lipoyl synthase family. The cofactor is [4Fe-4S] cluster.

The protein localises to the cytoplasm. The enzyme catalyses [[Fe-S] cluster scaffold protein carrying a second [4Fe-4S](2+) cluster] + N(6)-octanoyl-L-lysyl-[protein] + 2 oxidized [2Fe-2S]-[ferredoxin] + 2 S-adenosyl-L-methionine + 4 H(+) = [[Fe-S] cluster scaffold protein] + N(6)-[(R)-dihydrolipoyl]-L-lysyl-[protein] + 4 Fe(3+) + 2 hydrogen sulfide + 2 5'-deoxyadenosine + 2 L-methionine + 2 reduced [2Fe-2S]-[ferredoxin]. The protein operates within protein modification; protein lipoylation via endogenous pathway; protein N(6)-(lipoyl)lysine from octanoyl-[acyl-carrier-protein]: step 2/2. Functionally, catalyzes the radical-mediated insertion of two sulfur atoms into the C-6 and C-8 positions of the octanoyl moiety bound to the lipoyl domains of lipoate-dependent enzymes, thereby converting the octanoylated domains into lipoylated derivatives. The sequence is that of Lipoyl synthase from Shewanella amazonensis (strain ATCC BAA-1098 / SB2B).